Consider the following 261-residue polypeptide: DNA repair protein RecO (261 aa).

Belongs to the RecO family.

Its function is as follows. Involved in DNA repair and RecF pathway recombination. This is DNA repair protein RecO from Gloeobacter violaceus (strain ATCC 29082 / PCC 7421).